The chain runs to 345 residues: tRNA N6-adenosine threonylcarbamoyltransferase (345 aa).

2 residues coordinate Fe cation: His115 and His119. Substrate-binding positions include Leu137 to Gly141, Asp170, Gly183, Asp187, and Asn276. Fe cation is bound at residue Asp306.

The protein belongs to the KAE1 / TsaD family. Fe(2+) is required as a cofactor.

Its subcellular location is the cytoplasm. The catalysed reaction is L-threonylcarbamoyladenylate + adenosine(37) in tRNA = N(6)-L-threonylcarbamoyladenosine(37) in tRNA + AMP + H(+). In terms of biological role, required for the formation of a threonylcarbamoyl group on adenosine at position 37 (t(6)A37) in tRNAs that read codons beginning with adenine. Is involved in the transfer of the threonylcarbamoyl moiety of threonylcarbamoyl-AMP (TC-AMP) to the N6 group of A37, together with TsaE and TsaB. TsaD likely plays a direct catalytic role in this reaction. The sequence is that of tRNA N6-adenosine threonylcarbamoyltransferase from Pediococcus pentosaceus (strain ATCC 25745 / CCUG 21536 / LMG 10740 / 183-1w).